A 125-amino-acid chain; its full sequence is MSSCISPESSIISRFTRSHGIDGNVTSILSSSFACRSRSTTNCGLVTTELNCPHSFTSRNNVVKMHDKVISPPALVRTRTSSSVLANASSDSNVDLFMMSIVSSYVCYITVLLRMYTRHKTSFPL.

Residues 96 to 113 (LFMMSIVSSYVCYITVLL) traverse the membrane as a helical segment.

It localises to the membrane. This is an uncharacterized protein from Saccharomyces cerevisiae (strain ATCC 204508 / S288c) (Baker's yeast).